The sequence spans 73 residues: Small ribosomal subunit protein eS27 (73 aa).

Residues Cys28, Cys31, Cys47, and Cys50 each coordinate Zn(2+). The C4-type zinc finger occupies 28 to 50 (CVDCGNEQIIFGNASTEVKCHIC).

This sequence belongs to the eukaryotic ribosomal protein eS27 family. In terms of assembly, part of the 30S ribosomal subunit. It depends on Zn(2+) as a cofactor.

This is Small ribosomal subunit protein eS27 from Methanopyrus kandleri (strain AV19 / DSM 6324 / JCM 9639 / NBRC 100938).